Consider the following 114-residue polypeptide: T cell receptor beta variable 19 (114 aa).

Residues 1–21 form the signal peptide; the sequence is MSNQVLCCVVLCLLGANTVDG. One can recognise an Ig-like domain in the interval 22 to 114; sequence GITQSPKYLF…TAFYLCASSI (93 aa). N-linked (GlcNAc...) asparagine glycosylation occurs at Asn37. Residues Cys42 and Cys110 are joined by a disulfide bond.

As to quaternary structure, alpha-beta TR is a heterodimer composed of an alpha and beta chain; disulfide-linked. The alpha-beta TR is associated with the transmembrane signaling CD3 coreceptor proteins to form the TR-CD3 (TcR or TCR). The assembly of alpha-beta TR heterodimers with CD3 occurs in the endoplasmic reticulum where a single alpha-beta TR heterodimer associates with one CD3D-CD3E heterodimer, one CD3G-CD3E heterodimer and one CD247 homodimer forming a stable octameric structure. CD3D-CD3E and CD3G-CD3E heterodimers preferentially associate with TR alpha and TR beta chains, respectively. The association of the CD247 homodimer is the last step of TcR assembly in the endoplasmic reticulum and is required for transport to the cell surface. (Microbial infection) Interacts with Staphylococcus aureus enterotoxin type B/SEB.

It is found in the cell membrane. In terms of biological role, v region of the variable domain of T cell receptor (TR) beta chain that participates in the antigen recognition. Alpha-beta T cell receptors are antigen specific receptors which are essential to the immune response and are present on the cell surface of T lymphocytes. Recognize peptide-major histocompatibility (MH) (pMH) complexes that are displayed by antigen presenting cells (APC), a prerequisite for efficient T cell adaptive immunity against pathogens. Binding of alpha-beta TR to pMH complex initiates TR-CD3 clustering on the cell surface and intracellular activation of LCK that phosphorylates the ITAM motifs of CD3G, CD3D, CD3E and CD247 enabling the recruitment of ZAP70. In turn ZAP70 phosphorylates LAT, which recruits numerous signaling molecules to form the LAT signalosome. The LAT signalosome propagates signal branching to three major signaling pathways, the calcium, the mitogen-activated protein kinase (MAPK) kinase and the nuclear factor NF-kappa-B (NF-kB) pathways, leading to the mobilization of transcription factors that are critical for gene expression and essential for T cell growth and differentiation. The T cell repertoire is generated in the thymus, by V-(D)-J rearrangement. This repertoire is then shaped by intrathymic selection events to generate a peripheral T cell pool of self-MH restricted, non-autoaggressive T cells. Post-thymic interaction of alpha-beta TR with the pMH complexes shapes TR structural and functional avidity. The protein is T cell receptor beta variable 19 of Homo sapiens (Human).